A 283-amino-acid chain; its full sequence is 4-diphosphocytidyl-2-C-methyl-D-erythritol kinase (283 aa).

Residue K10 is part of the active site. 99-109 (PMGGGLGGGSS) contributes to the ATP binding site. The active site involves D141.

The protein belongs to the GHMP kinase family. IspE subfamily. As to quaternary structure, homodimer.

The enzyme catalyses 4-CDP-2-C-methyl-D-erythritol + ATP = 4-CDP-2-C-methyl-D-erythritol 2-phosphate + ADP + H(+). The protein operates within isoprenoid biosynthesis; isopentenyl diphosphate biosynthesis via DXP pathway; isopentenyl diphosphate from 1-deoxy-D-xylulose 5-phosphate: step 3/6. Catalyzes the phosphorylation of the position 2 hydroxy group of 4-diphosphocytidyl-2C-methyl-D-erythritol. The protein is 4-diphosphocytidyl-2-C-methyl-D-erythritol kinase of Citrobacter koseri (strain ATCC BAA-895 / CDC 4225-83 / SGSC4696).